A 423-amino-acid polypeptide reads, in one-letter code: Diaminobutyrate--2-oxoglutarate transaminase (423 aa).

Residue Lys-267 is modified to N6-(pyridoxal phosphate)lysine.

It belongs to the class-III pyridoxal-phosphate-dependent aminotransferase family. As to quaternary structure, homohexamer. Pyridoxal 5'-phosphate serves as cofactor.

It carries out the reaction L-2,4-diaminobutanoate + 2-oxoglutarate = L-aspartate 4-semialdehyde + L-glutamate. Its pathway is amine and polyamine biosynthesis; ectoine biosynthesis; L-ectoine from L-aspartate 4-semialdehyde: step 1/3. In terms of biological role, catalyzes reversively the conversion of L-aspartate beta-semialdehyde (ASA) to L-2,4-diaminobutyrate (DABA) by transamination with L-glutamate. This is Diaminobutyrate--2-oxoglutarate transaminase (ectB) from Chromohalobacter salexigens (strain ATCC BAA-138 / DSM 3043 / CIP 106854 / NCIMB 13768 / 1H11).